The following is a 178-amino-acid chain: uncharacterized protein (178 aa).

This is an uncharacterized protein from Sinorhizobium fredii (strain NBRC 101917 / NGR234).